Consider the following 423-residue polypeptide: 3-phosphoshikimate 1-carboxyvinyltransferase (423 aa).

Residues Lys-19, Ser-20, and Arg-24 each contribute to the 3-phosphoshikimate site. Lys-19 serves as a coordination point for phosphoenolpyruvate. Residues Gly-89 and Arg-118 each coordinate phosphoenolpyruvate. 6 residues coordinate 3-phosphoshikimate: Ser-164, Ser-165, Gln-166, Ser-192, Asp-304, and Lys-331. Position 166 (Gln-166) interacts with phosphoenolpyruvate. Catalysis depends on Asp-304, which acts as the Proton acceptor. Phosphoenolpyruvate contacts are provided by Arg-335 and Arg-377.

It belongs to the EPSP synthase family. Monomer.

It localises to the cytoplasm. The catalysed reaction is 3-phosphoshikimate + phosphoenolpyruvate = 5-O-(1-carboxyvinyl)-3-phosphoshikimate + phosphate. It functions in the pathway metabolic intermediate biosynthesis; chorismate biosynthesis. Catalyzes the transfer of the enolpyruvyl moiety of phosphoenolpyruvate (PEP) to the 5-hydroxyl of shikimate-3-phosphate (S3P) to produce enolpyruvyl shikimate-3-phosphate and inorganic phosphate. The protein is 3-phosphoshikimate 1-carboxyvinyltransferase of Korarchaeum cryptofilum (strain OPF8).